The primary structure comprises 126 residues: Large ribosomal subunit protein bL12 (126 aa).

Positions 36–55 (APAPAAAPAAGGDQGGAEAA) are enriched in low complexity. Residues 36 to 57 (APAPAAAPAAGGDQGGAEAAEQ) are disordered.

Belongs to the bacterial ribosomal protein bL12 family. As to quaternary structure, homodimer. Part of the ribosomal stalk of the 50S ribosomal subunit. Forms a multimeric L10(L12)X complex, where L10 forms an elongated spine to which 2 to 4 L12 dimers bind in a sequential fashion. Binds GTP-bound translation factors.

In terms of biological role, forms part of the ribosomal stalk which helps the ribosome interact with GTP-bound translation factors. Is thus essential for accurate translation. This chain is Large ribosomal subunit protein bL12, found in Natranaerobius thermophilus (strain ATCC BAA-1301 / DSM 18059 / JW/NM-WN-LF).